A 286-amino-acid chain; its full sequence is Pantothenate synthetase (286 aa).

30–37 (MGFLHEGH) lines the ATP pocket. H37 (proton donor) is an active-site residue. (R)-pantoate is bound at residue Q61. Q61 is a binding site for beta-alanine. Residue 147-150 (GLKD) participates in ATP binding. Q153 provides a ligand contact to (R)-pantoate. Residues V176 and 184-187 (KSSR) each bind ATP.

Belongs to the pantothenate synthetase family. Homodimer.

It is found in the cytoplasm. It catalyses the reaction (R)-pantoate + beta-alanine + ATP = (R)-pantothenate + AMP + diphosphate + H(+). The protein operates within cofactor biosynthesis; (R)-pantothenate biosynthesis; (R)-pantothenate from (R)-pantoate and beta-alanine: step 1/1. Functionally, catalyzes the condensation of pantoate with beta-alanine in an ATP-dependent reaction via a pantoyl-adenylate intermediate. The chain is Pantothenate synthetase from Bacillus velezensis (strain DSM 23117 / BGSC 10A6 / LMG 26770 / FZB42) (Bacillus amyloliquefaciens subsp. plantarum).